Here is a 543-residue protein sequence, read N- to C-terminus: Tyrosine-protein kinase Yes (543 aa).

The span at 1-20 (MGCIKSKENKSPAIKYRPEN) shows a compositional bias: basic and acidic residues. The interval 1–45 (MGCIKSKENKSPAIKYRPENTPEPVSTSVSHYGAEPTTVSPCPSS) is disordered. Gly-2 is lipidated: N-myristoyl glycine. A lipid anchor (S-palmitoyl cysteine; in membrane form) is attached at Cys-3. A Phosphothreonine modification is found at Thr-21. Phosphotyrosine is present on Tyr-32. Ser-40 is modified (phosphoserine). An SH3 domain is found at 91–152 (GGVTIFVALY…PSNYVAPADS (62 aa)). The 98-residue stretch at 158–255 (WYFGKMGRKD…GLCHKLTTVC (98 aa)) folds into the SH2 domain. The 254-residue stretch at 277-530 (LRLEVKLGQG…YIQSFLEDYF (254 aa)) folds into the Protein kinase domain. ATP contacts are provided by residues 283-291 (LGQGCFGEV) and Lys-305. Phosphotyrosine is present on residues Tyr-336 and Tyr-345. Asp-396 functions as the Proton acceptor in the catalytic mechanism. Tyr-426 bears the Phosphotyrosine; by autocatalysis mark. Position 446 is a phosphotyrosine (Tyr-446). Position 537 is a phosphotyrosine; by CSK (Tyr-537).

Belongs to the protein kinase superfamily. Tyr protein kinase family. SRC subfamily. As to quaternary structure, interacts with YAP1 and CSF1R. Interacts with CTNND1; this interaction allows YES1-mediated activation of FYN and FER and subsequent phosphorylation of CTNND1. Interacts with FASLG. Interacts with IL6ST/gp130. Interacts with SCRIB, when YES1 is in a closed conformation; the interaction facilitates YES1 autophosphorylation. Phosphorylated. Phosphorylation by CSK on the C-terminal tail maintains the enzyme in an inactive state. Autophosphorylation at Tyr-426 maintains enzyme activity by blocking CSK-mediated inhibition. In terms of processing, palmitoylation at Cys-3 promotes membrane localization. In terms of tissue distribution, expressed in the epithelial cells of renal proximal tubules and stomach as well as hematopoietic cells in the bone marrow and spleen in the fetal tissues. In adult, expressed in epithelial cells of the renal proximal tubules and present in keratinocytes in the basal epidermal layer of epidermis.

The protein resides in the cell membrane. The protein localises to the cytoplasm. It localises to the cytoskeleton. It is found in the microtubule organizing center. Its subcellular location is the centrosome. The protein resides in the cytosol. The protein localises to the cell junction. It carries out the reaction L-tyrosyl-[protein] + ATP = O-phospho-L-tyrosyl-[protein] + ADP + H(+). In terms of biological role, non-receptor protein tyrosine kinase that is involved in the regulation of cell growth and survival, apoptosis, cell-cell adhesion, cytoskeleton remodeling, and differentiation. Stimulation by receptor tyrosine kinases (RTKs) including EGFR, PDGFR, CSF1R and FGFR leads to recruitment of YES1 to the phosphorylated receptor, and activation and phosphorylation of downstream substrates. Upon EGFR activation, promotes the phosphorylation of PARD3 to favor epithelial tight junction assembly. Participates in the phosphorylation of specific junctional components such as CTNND1 by stimulating the FYN and FER tyrosine kinases at cell-cell contacts. Upon T-cell stimulation by CXCL12, phosphorylates collapsin response mediator protein 2/DPYSL2 and induces T-cell migration. Participates in CD95L/FASLG signaling pathway and mediates AKT-mediated cell migration. Plays a role in cell cycle progression by phosphorylating the cyclin-dependent kinase 4/CDK4 thus regulating the G1 phase. Also involved in G2/M progression and cytokinesis. Catalyzes phosphorylation of organic cation transporter OCT2 which induces its transport activity. The sequence is that of Tyrosine-protein kinase Yes (YES1) from Homo sapiens (Human).